A 316-amino-acid chain; its full sequence is Lys-63-specific deubiquitinase BRCC36 (316 aa).

Ala2 is modified (N-acetylalanine). The MPN domain maps to 12–179 (VHLESDAFLV…YTCFQSIQAQ (168 aa)). Zn(2+) contacts are provided by His122, His124, and Asp135. A JAMM motif motif is present at residues 122-135 (HSHPHITVWPSHVD). A Phosphoserine modification is found at Ser258.

The protein belongs to the peptidase M67A family. BRCC36 subfamily. Component of the ARISC complex, at least composed of UIMC1/RAP80, ABRAXAS1, BRCC3/BRCC36, BABAM2 and BABAM1/NBA1. Component of the BRCA1-A complex, at least composed of BRCA1, BARD1, UIMC1/RAP80, ABRAXAS1, BRCC3/BRCC36, BABAM2 and BABAM1/NBA1. In the BRCA1-A complex, interacts directly with ABRAXAS1 and BABAM2. Component of the BRISC complex, at least composed of ABRAXAS2, BRCC3/BRCC36, BABAM2 and BABAM1/NBA1. Identified in a complex with SHMT2 and the other subunits of the BRISC complex. In the BRISC complex, interacts directly with ABRAXAS2. Identified in a complex with ABRAXAS2 and NUMA1. The BRISC complex interacts with the CSN complex. Component of the BRCA1/BRCA2 containing complex (BRCC), which also contains BRCA1, BRCA2, BARD1, BABAM2 and RAD51. BRCC is a ubiquitin E3 ligase complex that enhances cellular survival following DNA damage. Interacts with BRCA1. Binds polyubiquitin. Interacts with PWWP2B. Interacts with HDAC1; this interaction is enhanced in the presence of PWWP2B. The cofactor is Zn(2+).

The protein localises to the nucleus. The protein resides in the cytoplasm. It localises to the cytoskeleton. Its subcellular location is the spindle pole. Functionally, metalloprotease that specifically cleaves 'Lys-63'-linked polyubiquitin chains. Does not have activity toward 'Lys-48'-linked polyubiquitin chains. Component of the BRCA1-A complex, a complex that specifically recognizes 'Lys-63'-linked ubiquitinated histones H2A and H2AX at DNA lesions sites, leading to target the BRCA1-BARD1 heterodimer to sites of DNA damage at double-strand breaks (DSBs). In the BRCA1-A complex, it specifically removes 'Lys-63'-linked ubiquitin on histones H2A and H2AX, antagonizing the RNF8-dependent ubiquitination at double-strand breaks (DSBs). Catalytic subunit of the BRISC complex, a multiprotein complex that specifically cleaves 'Lys-63'-linked ubiquitin in various substrates. Mediates the specific 'Lys-63'-specific deubiquitination associated with the COP9 signalosome complex (CSN), via the interaction of the BRISC complex with the CSN complex. The BRISC complex is required for normal mitotic spindle assembly and microtubule attachment to kinetochores via its role in deubiquitinating NUMA1. Plays a role in interferon signaling via its role in the deubiquitination of the interferon receptor IFNAR1; deubiquitination increases IFNAR1 activity by enhancing its stability and cell surface expression. Acts as a regulator of the NLRP3 inflammasome by mediating deubiquitination of NLRP3, leading to NLRP3 inflammasome assembly. Down-regulates the response to bacterial lipopolysaccharide (LPS) via its role in IFNAR1 deubiquitination. Deubiquitinates HDAC1 and PWWP2B leading to their stabilization. The sequence is that of Lys-63-specific deubiquitinase BRCC36 (BRCC3) from Bos taurus (Bovine).